A 1395-amino-acid chain; its full sequence is MERRVLIVESEHDFALSMATVLKGAGYQTALAETAADAQRELEKRRPDLVVLRAELKDQSGFVLCGNIKKGKWGQNLKVLLLSSESGVDGLAQHRQTPQAADGYLAIPFEMGELAALSHGIVPPGTDDTGASLDAALNGTREAPPPMPPSLKAAAGGPPKLPKRERRSAMTEEDRAFLDRTFQSIADRKAELLAESRQLKRPPPRRELMGTPEGKIQILRDELKTREAQLARLSEIWNVRERELLSGEDRIHEKDVELQGLKMQVDDLLRRFNEAQQATIQKEREHGATVDDLLLQKFSAEKDLIEVVASKEKDINLLRREVSRAEEELSRRAGELEHGRNEYDKLEKHLGVVTLEFEVKEQKLQDTVLANEGEIARLTKRGDDFEAELNRTISERDQRFAELDGEIQALQERLQQTEQERDTTVRGLEARAARAEEHGTQADAEIHRLNAERDALEAKLSQQVADLEADLARTMGERDQLRLDKDAQEAELTQRIEERDAKLGTLERELSETIARNEHTEAELNANIQQQLERIGELEGEVEAVKTHLEDRENELTAELQALGQAKDELETDLNDRLQALSQAKDALEADLSRQLEELRSAKAELEADLTGQIQALTSQLEETQRQLDDSQRTGEQLSARVAQLEDTVSQRESTIESLQGDVAARDQRISELSGDLEATSQTLAQTQQTLAQTEQQLADTQNTLASTEGALAETRGELDATSQTLQQTQQTLAQTEGALAETRGELDATSQTLAQTQQTLAQTEQQLADTQNTLASTEGTLAETRGELEATSQTLQQTHAALEDTRGALQETSDTLAHTTRERDQRIAELADLGAAKDALEQELTGQIGHLRSELSETQGNYEAERAAHEKLAAESSAHIGDLTSERDGLRSELEATSQTLEQTHGQLAATRDALAREQHAHQESRKAAASTQTTLEGQLAEARAHGEDLGEHLTLTKHELGTRVAELTQLTATLAQTENTRAHLEERLHTLTEESQRREELLQNDLTQKGTELSDTLRKLTHVTQEKMRQAEVLNREVATRTEQLKAMEAKLQTQATEARRQAEGLGQQITGLNEQLEQGRKALAGREDQLRAAGAAQQKLTAERDGLAGQLQQAEARLQQQAQQANQERADAKRAADELAAKLAKTEQRITQFAQDAQTQATEADARAKDLQGQLSARAKKIQDLELAVENAQGAKSRAEKELNAKVAAAESKAHEASTRLAAAQKERKDLEARHAKEQEDLAAKQKAELERRDAIKAQEVARLQQSVQEKSKALKVAELELARYKSKSATTATPAKAAAKPAAAEDDELAVRTQLNQVIAPAAAAQAPAPAKKPAAKPAAQAPAKKAPAPAPAPPAALSDESEPTDRTLVIQLPTAKEDDDWTALVDELDK.

The 119-residue stretch at 4 to 122 (RVLIVESEHD…ELAALSHGIV (119 aa)) folds into the Response regulatory domain. A 4-aspartylphosphate modification is found at Asp-48. Disordered stretches follow at residues 137-172 (LNGT…AMTE), 874-893 (AAES…GLRS), 919-947 (EQHA…ARAH), 1212-1249 (AAES…AAKQ), 1287-1312 (RYKS…EDDE), and 1326-1395 (AAAA…ELDK). Residues 213-911 (EGKIQILRDE…LEQTHGQLAA (699 aa)) are a coiled coil. 2 stretches are compositionally biased toward basic and acidic residues: residues 919 to 928 (EQHAHQESRK) and 1228 to 1249 (QKER…AAKQ). Low complexity-rich tracts occupy residues 1291–1306 (KSAT…AKPA) and 1326–1352 (AAAA…KKAP). Over residues 1382-1395 (EDDDWTALVDELDK) the composition is skewed to acidic residues.

In terms of assembly, interacts with MglA.

The protein resides in the cytoplasm. Required for adventurous-gliding motility (A motility), in response to environmental signals sensed by the frz chemosensory system. Forms ordered clusters that span the cell length and that remain stationary relative to the surface across which the cells move, serving as anchor points (focal, transient adhesion sites) that allow the bacterium to move forward. Clusters disassemble at the lagging cell pole. The protein is Adventurous-gliding motility protein Z (aglZ) of Myxococcus xanthus (strain DK1622).